Here is a 358-residue protein sequence, read N- to C-terminus: Putative inhibitor of apoptosis (358 aa).

2 BIR repeats span residues 4-70 and 90-157; these read EKDR…CPFL and YAAR…CEYL. The Zn(2+) site is built by Cys-127, Cys-130, His-147, and Cys-154. Residues 193–283 form the CARD domain; that stretch reads EPPNDLSLIR…MLYKHLFVQQ (91 aa). The segment at 311–346 adopts an RING-type zinc-finger fold; the sequence is CKVCMDKEVSIVFIPCGHLVVCKDCAPSLRKCPICR.

Belongs to the IAP family.

This chain is Putative inhibitor of apoptosis (PIAP), found in Sus scrofa (Pig).